A 459-amino-acid polypeptide reads, in one-letter code: Zinc finger chaperone zpr1 (459 aa).

C4-type zinc fingers lie at residues 38-70 (CMEC…CPHC) and 259-291 (CPSC…CDRC).

The protein belongs to the ZPR1 family.

The protein localises to the cytoplasm. Its subcellular location is the nucleus. In terms of biological role, acts as a protein folding chaperone for elongation factor 1-alpha. The chain is Zinc finger chaperone zpr1 from Schizosaccharomyces pombe (strain 972 / ATCC 24843) (Fission yeast).